The primary structure comprises 98 residues: MIDRATVEKIAHLARLEINSGEEEQFALQLSGILDYFEQLSELDTENVLPTTRAIEIQNITRADSNRLYPDHEVLVQESPAPEGDYFLVPRILNTDED.

It belongs to the GatC family. In terms of assembly, heterotrimer of A, B and C subunits.

It catalyses the reaction L-glutamyl-tRNA(Gln) + L-glutamine + ATP + H2O = L-glutaminyl-tRNA(Gln) + L-glutamate + ADP + phosphate + H(+). The enzyme catalyses L-aspartyl-tRNA(Asn) + L-glutamine + ATP + H2O = L-asparaginyl-tRNA(Asn) + L-glutamate + ADP + phosphate + 2 H(+). In terms of biological role, allows the formation of correctly charged Asn-tRNA(Asn) or Gln-tRNA(Gln) through the transamidation of misacylated Asp-tRNA(Asn) or Glu-tRNA(Gln) in organisms which lack either or both of asparaginyl-tRNA or glutaminyl-tRNA synthetases. The reaction takes place in the presence of glutamine and ATP through an activated phospho-Asp-tRNA(Asn) or phospho-Glu-tRNA(Gln). This Microcystis aeruginosa (strain NIES-843 / IAM M-2473) protein is Aspartyl/glutamyl-tRNA(Asn/Gln) amidotransferase subunit C.